Consider the following 207-residue polypeptide: Ribosomal RNA small subunit methyltransferase G (207 aa).

Residues G73, L78, V124 to E125, and R139 each bind S-adenosyl-L-methionine.

It belongs to the methyltransferase superfamily. RNA methyltransferase RsmG family.

Its subcellular location is the cytoplasm. It carries out the reaction guanosine(527) in 16S rRNA + S-adenosyl-L-methionine = N(7)-methylguanosine(527) in 16S rRNA + S-adenosyl-L-homocysteine. Specifically methylates the N7 position of guanine in position 527 of 16S rRNA. In Escherichia coli (strain SMS-3-5 / SECEC), this protein is Ribosomal RNA small subunit methyltransferase G.